Reading from the N-terminus, the 428-residue chain is Serine--tRNA ligase (428 aa).

An L-serine-binding site is contributed by 235–237 (TAE). 266–268 (RSE) contacts ATP. Residue Glu289 participates in L-serine binding. Residue 353-356 (EISS) coordinates ATP. An L-serine-binding site is contributed by Ser389.

Belongs to the class-II aminoacyl-tRNA synthetase family. Type-1 seryl-tRNA synthetase subfamily. Homodimer. The tRNA molecule binds across the dimer.

It localises to the cytoplasm. The catalysed reaction is tRNA(Ser) + L-serine + ATP = L-seryl-tRNA(Ser) + AMP + diphosphate + H(+). It carries out the reaction tRNA(Sec) + L-serine + ATP = L-seryl-tRNA(Sec) + AMP + diphosphate + H(+). Its pathway is aminoacyl-tRNA biosynthesis; selenocysteinyl-tRNA(Sec) biosynthesis; L-seryl-tRNA(Sec) from L-serine and tRNA(Sec): step 1/1. Its function is as follows. Catalyzes the attachment of serine to tRNA(Ser). Is also able to aminoacylate tRNA(Sec) with serine, to form the misacylated tRNA L-seryl-tRNA(Sec), which will be further converted into selenocysteinyl-tRNA(Sec). This Shewanella piezotolerans (strain WP3 / JCM 13877) protein is Serine--tRNA ligase.